Here is a 485-residue protein sequence, read N- to C-terminus: Ribulose bisphosphate carboxylase large chain 2 (485 aa).

2 residues coordinate substrate: asparagine 125 and threonine 175. The Proton acceptor role is filled by lysine 177. Lysine 179 contributes to the substrate binding site. Mg(2+) is bound by residues lysine 203, aspartate 205, and glutamate 206. At lysine 203 the chain carries N6-carboxylysine. Catalysis depends on histidine 295, which acts as the Proton acceptor. The substrate site is built by arginine 296, histidine 328, and serine 380.

Belongs to the RuBisCO large chain family. Type I subfamily. As to quaternary structure, heterohexadecamer of 8 large chains and 8 small chains. It depends on Mg(2+) as a cofactor.

The catalysed reaction is 2 (2R)-3-phosphoglycerate + 2 H(+) = D-ribulose 1,5-bisphosphate + CO2 + H2O. It carries out the reaction D-ribulose 1,5-bisphosphate + O2 = 2-phosphoglycolate + (2R)-3-phosphoglycerate + 2 H(+). RuBisCO catalyzes two reactions: the carboxylation of D-ribulose 1,5-bisphosphate, the primary event in carbon dioxide fixation, as well as the oxidative fragmentation of the pentose substrate. Both reactions occur simultaneously and in competition at the same active site. This chain is Ribulose bisphosphate carboxylase large chain 2, found in Methylibium petroleiphilum (strain ATCC BAA-1232 / LMG 22953 / PM1).